A 253-amino-acid polypeptide reads, in one-letter code: 3-deoxy-manno-octulosonate cytidylyltransferase (253 aa).

Belongs to the KdsB family.

It localises to the cytoplasm. It carries out the reaction 3-deoxy-alpha-D-manno-oct-2-ulosonate + CTP = CMP-3-deoxy-beta-D-manno-octulosonate + diphosphate. Its pathway is nucleotide-sugar biosynthesis; CMP-3-deoxy-D-manno-octulosonate biosynthesis; CMP-3-deoxy-D-manno-octulosonate from 3-deoxy-D-manno-octulosonate and CTP: step 1/1. The protein operates within bacterial outer membrane biogenesis; lipopolysaccharide biosynthesis. Activates KDO (a required 8-carbon sugar) for incorporation into bacterial lipopolysaccharide in Gram-negative bacteria. This Acinetobacter baumannii (strain SDF) protein is 3-deoxy-manno-octulosonate cytidylyltransferase.